An 841-amino-acid polypeptide reads, in one-letter code: Formin-like protein 10 (841 aa).

The N-terminal stretch at Met-1–Ala-25 is a signal peptide. The helical transmembrane segment at Leu-102–Phe-122 threads the bilayer. 3 disordered regions span residues Ser-137 to Leu-166, Ile-254 to Arg-297, and Lys-403 to Arg-512. Over residues Ser-139–Leu-152 the composition is skewed to polar residues. A compositionally biased stretch (low complexity) spans Ile-254–Pro-278. Residues His-279–Glu-293 are compositionally biased toward polar residues. A compositionally biased stretch (pro residues) spans Leu-426–Pro-444. In terms of domain architecture, FH2 spans Glu-469–Ala-841. The segment covering Tyr-502–Arg-512 has biased composition (polar residues).

The protein belongs to the formin-like family. Class-I subfamily.

The protein localises to the membrane. Functionally, might be involved in the organization and polarity of the actin cytoskeleton. The chain is Formin-like protein 10 (FH10) from Arabidopsis thaliana (Mouse-ear cress).